We begin with the raw amino-acid sequence, 337 residues long: Eukaryotic translation initiation factor 3 subunit H (337 aa).

Residues 25-158 (VQIEGLAVLK…LKALKLSDSF (134 aa)) form the MPN domain. Serine 178 is subject to Phosphoserine; by ATPK1. A compositionally biased stretch (basic and acidic residues) spans 267 to 278 (RRTENMARKSAG). Residues 267-290 (RRTENMARKSAGEEPLPEEDPSNP) are disordered.

It belongs to the eIF-3 subunit H family. As to quaternary structure, component of the eukaryotic translation initiation factor 3 (eIF-3) complex. Interacts directly with TIF3A1, TIF3B1, TIF3C1, TIF3E1 and TIF3F1. Associates with the CSN (COP9 signalosome) complex. Binds to CSN1, CSN7 and CSN8. Interacts with ATPK1. In response to auxin (NAA), phosphorylated at Ser-178 by ATPK1 and binds to polysomes via TOR signaling. This phosphorylation is repressed by Torin-1. In terms of tissue distribution, mostly expressed in roots and flowers, and, to a lower extent, in leaves, stems and siliques.

The protein resides in the cytoplasm. Component of the eukaryotic translation initiation factor 3 (eIF-3) complex, which is involved in protein synthesis of a specialized repertoire of mRNAs and, together with other initiation factors, stimulates binding of mRNA and methionyl-tRNAi to the 40S ribosome. The eIF-3 complex specifically targets and initiates translation of a subset of mRNAs involved in cell proliferation (Potential). Regulates translation initiation of specific 5' mRNAs harboring multiple upstream open reading frames (uORFs) in their 5' leader sequence (e.g. BETA-OHASE 2 and LHY). This is Eukaryotic translation initiation factor 3 subunit H (TIF3H1) from Arabidopsis thaliana (Mouse-ear cress).